The following is a 237-amino-acid chain: MNDIKYKRIMLKLSGEALAGENGYGLDFKVVKRISKEIKELVDMGVEIGAVVGGGNIWRGRNGEDMDRTTADYMGMLATCINAMALQDSLEQLGVDTRVQTAIEMKEVAEPFIRRRAMRHLEKGRVVIFAAGTGNPYFSTDTTAALRAAEIEADIILLAKKVDGVYDKDPHKHEKAQKFETLTYIDVLDQGLQVMDSTATSLCMDNNIPILVFALDAPGNIRKAISGEKIGTIVCKE.

An ATP-binding site is contributed by 12-15 (KLSG). The involved in allosteric activation by GTP stretch occupies residues 20–25 (GENGYG). Residue Gly-54 participates in UMP binding. Gly-55 and Arg-59 together coordinate ATP. Residues Asp-72 and 133–140 (TGNPYFST) each bind UMP. Tyr-166 and Asp-169 together coordinate ATP.

It belongs to the UMP kinase family. In terms of assembly, homohexamer.

The protein localises to the cytoplasm. It carries out the reaction UMP + ATP = UDP + ADP. It participates in pyrimidine metabolism; CTP biosynthesis via de novo pathway; UDP from UMP (UMPK route): step 1/1. With respect to regulation, allosterically activated by GTP. Inhibited by UTP. Functionally, catalyzes the reversible phosphorylation of UMP to UDP. The protein is Uridylate kinase of Clostridium tetani (strain Massachusetts / E88).